The primary structure comprises 486 residues: Fructose dehydrogenase cytochrome subunit (486 aa).

Residues 1-25 (MRYFRPLSATAMTTVLLLAGTNVRA) form the signal peptide. Cytochrome c domains lie at 38–142 (PSIS…MTEV), 186–294 (DDWN…RSVP), and 330–423 (TKTT…LSHF). Residues Cys52, Cys55, His56, Cys201, Cys204, His205, Cys343, Cys346, and His347 each contribute to the heme c site. Residues 458–478 (LLGTGGILGAILVVAGLWWLI) traverse the membrane as a helical segment.

Heterotrimer composed of FdhL, FdhS and FdhC. Post-translationally, binds 3 heme c groups covalently per subunit.

It is found in the cell membrane. Cytochrome subunit of fructose dehydrogenase, an enzyme that catalyzes the oxidation of D-fructose to produce 5-keto-D-fructose. In the complex, mediates both the electron transfer to ubiquinone and the anchoring of the complex to the membrane. The sequence is that of Fructose dehydrogenase cytochrome subunit (fdhC) from Gluconobacter japonicus.